We begin with the raw amino-acid sequence, 555 residues long: Dihydroxy-acid dehydratase (555 aa).

Asp78 contacts Mg(2+). Residue Cys119 participates in [2Fe-2S] cluster binding. Positions 120 and 121 each coordinate Mg(2+). N6-carboxylysine is present on Lys121. Cys192 lines the [2Fe-2S] cluster pocket. A Mg(2+)-binding site is contributed by Glu444. Ser470 (proton acceptor) is an active-site residue.

This sequence belongs to the IlvD/Edd family. Homodimer. It depends on [2Fe-2S] cluster as a cofactor. Mg(2+) serves as cofactor.

It carries out the reaction (2R)-2,3-dihydroxy-3-methylbutanoate = 3-methyl-2-oxobutanoate + H2O. The catalysed reaction is (2R,3R)-2,3-dihydroxy-3-methylpentanoate = (S)-3-methyl-2-oxopentanoate + H2O. Its pathway is amino-acid biosynthesis; L-isoleucine biosynthesis; L-isoleucine from 2-oxobutanoate: step 3/4. The protein operates within amino-acid biosynthesis; L-valine biosynthesis; L-valine from pyruvate: step 3/4. Its function is as follows. Functions in the biosynthesis of branched-chain amino acids. Catalyzes the dehydration of (2R,3R)-2,3-dihydroxy-3-methylpentanoate (2,3-dihydroxy-3-methylvalerate) into 2-oxo-3-methylpentanoate (2-oxo-3-methylvalerate) and of (2R)-2,3-dihydroxy-3-methylbutanoate (2,3-dihydroxyisovalerate) into 2-oxo-3-methylbutanoate (2-oxoisovalerate), the penultimate precursor to L-isoleucine and L-valine, respectively. The sequence is that of Dihydroxy-acid dehydratase from Halalkalibacterium halodurans (strain ATCC BAA-125 / DSM 18197 / FERM 7344 / JCM 9153 / C-125) (Bacillus halodurans).